We begin with the raw amino-acid sequence, 2414 residues long: Centrosome-associated protein CEP250 (2414 aa).

Coiled coils occupy residues 91–153 (EEPN…ELVR) and 248–357 (LVAK…VEEE). Disordered stretches follow at residues 356-384 (EEDT…DPQD), 672-707 (AEEA…QETA), 1191-1212 (SRPE…DPDQ), 1269-1303 (EAQK…QNSL), 2050-2071 (AGAR…QERQ), 2194-2238 (ALEE…KERL), and 2275-2317 (RERR…GSSD). Residues 371–381 (QSDCNGLSQFD) show a composition bias toward polar residues. A coiled-coil region spans residues 400–1165 (QQAVQDLRQQ…QLEALVAEQQ (766 aa)). Over residues 684–704 (RGTREEKEELKDKLSEAHHQQ) the composition is skewed to basic and acidic residues. Coiled-coil stretches lie at residues 1237–2200 (LQKL…EQQS) and 2231–2290 (GVEE…ASRA). Residues 1280–1289 (QDLQRQLSQS) are compositionally biased toward low complexity. A compositionally biased stretch (polar residues) spans 2196 to 2209 (EEQQSGGPHSTSRA). Residues 2275-2286 (RERRKLKRDSVR) show a composition bias toward basic and acidic residues. Residue S2292 is modified to Phosphoserine. Residues 2305–2317 (QQDGRGSQRGSSD) are compositionally biased toward low complexity. Residues 2320 to 2345 (LVVELQREVALLRAQLALERKQRQDY) adopt a coiled-coil conformation. S2389 and S2393 each carry phosphoserine; by NEK2. The segment at 2390-2414 (LNQSLTSPGPCLLHPSLDTTQNTHR) is disordered.

As to quaternary structure, monomer and homodimer. Forms a complex in vitro with both NEK2 kinase and the PPP1CC catalytic subunit of protein phosphatase 1 (PP1). Interacts with CEP135. Interacts with CROCC/rootletin. Interacts with CNTLN. Interacts with NIN (via C-terminus). Post-translationally, differentially phosphorylated during cell cycle. Phosphorylation may regulate association/dissociation from centrosome. During M phase of mitosis, C-terminal part is phosphorylated by NEK2, suggesting that it may trigger the dissociation from the mitotic centrosome. Dephosphorylated in vitro by the PP1 phosphatase. As to expression, expressed in the retina.

It localises to the cytoplasm. Its subcellular location is the perinuclear region. The protein resides in the cytoskeleton. It is found in the microtubule organizing center. The protein localises to the centrosome. It localises to the centriole. Its subcellular location is the cilium basal body. The protein resides in the cell projection. It is found in the cilium. The protein localises to the photoreceptor outer segment. It localises to the photoreceptor inner segment. Plays an important role in centrosome cohesion during interphase. Recruits CCDC102B to the proximal ends of centrioles. Maintains centrosome cohesion by forming intercentriolar linkages. Accumulates at the proximal end of each centriole, forming supramolecular assemblies with viscous material properties that promote organelle cohesion. May be involved in ciliogenesis. The sequence is that of Centrosome-associated protein CEP250 (Cep250) from Mus musculus (Mouse).